We begin with the raw amino-acid sequence, 215 residues long: Kinetochore protein Spc25 (215 aa).

The stretch at 43-114 (DNLLTAMEKA…MECIHALKRA (72 aa)) forms a coiled coil.

It belongs to the SPC25 family. Component of the Ndc80 complex, which is composed of Ndc80, Nuf2 and Spc25.

It localises to the nucleus. The protein localises to the chromosome. Its subcellular location is the centromere. The protein resides in the kinetochore. In terms of biological role, acts as a component of the essential kinetochore-associated Ndc80 complex, which is required for chromosome segregation and spindle checkpoint activity during meiosis and mitosis. Required for kinetochore integrity and the organization of stable microtubule binding sites in the outer plate of the kinetochore. Participates in SAC signaling that responds specifically to disruptions in spindle microtubule dynamics. The NDC80 complex synergistically enhances the affinity of the SKA1 complex for microtubules and may allow the NDC80 complex to track depolymerizing microtubules. The sequence is that of Kinetochore protein Spc25 from Drosophila ananassae (Fruit fly).